The sequence spans 259 residues: MLKRILITNDDGFDSPGLLALKEALCDVAHLTVVAPANEKSACGHGLTLTSPLRFIKLDDDVYKLRDGTPTDCIYLALNALYEEHSKPDLIISGINLGSNMGEDITYSGTASGAMEGVIHGIPSVAFSQLLHDKNTFGFDFALAKKVVRELTLKILSGGFPLGDRKFLNVNIPYVGIEEFKGYKVTEMGYRLYGNDAHLHRNPRGEEHYWLGLHPLAWNERNNARESDFKVATEGYVSITPIKLDLTSYEDIKELEAWI.

A divalent metal cation is bound by residues D10, D11, S41, and N96.

The protein belongs to the SurE nucleotidase family. A divalent metal cation serves as cofactor.

The protein resides in the cytoplasm. It carries out the reaction a ribonucleoside 5'-phosphate + H2O = a ribonucleoside + phosphate. In terms of biological role, nucleotidase that shows phosphatase activity on nucleoside 5'-monophosphates. This chain is 5'-nucleotidase SurE, found in Wolinella succinogenes (strain ATCC 29543 / DSM 1740 / CCUG 13145 / JCM 31913 / LMG 7466 / NCTC 11488 / FDC 602W) (Vibrio succinogenes).